A 194-amino-acid polypeptide reads, in one-letter code: Imidazoleglycerol-phosphate dehydratase (194 aa).

This sequence belongs to the imidazoleglycerol-phosphate dehydratase family.

The protein resides in the cytoplasm. The enzyme catalyses D-erythro-1-(imidazol-4-yl)glycerol 3-phosphate = 3-(imidazol-4-yl)-2-oxopropyl phosphate + H2O. The protein operates within amino-acid biosynthesis; L-histidine biosynthesis; L-histidine from 5-phospho-alpha-D-ribose 1-diphosphate: step 6/9. The chain is Imidazoleglycerol-phosphate dehydratase from Bacillus cereus (strain B4264).